We begin with the raw amino-acid sequence, 326 residues long: Transmembrane protein 171 (326 aa).

Transmembrane regions (helical) follow at residues 22–42, 57–77, 114–134, and 161–181; these read IFFL…LSIF, MMLK…VILA, LIFG…GIWV, and FLSL…FFVV. The disordered stretch occupies residues 229 to 326; that stretch reads FPESSASAAA…LSPSSEPSPP (98 aa). Low complexity predominate over residues 230 to 240; that stretch reads PESSASAAARS. Over residues 257-266 the composition is skewed to polar residues; the sequence is SIFQSGSPTP. Low complexity-rich tracts occupy residues 288-302 and 312-326; these read SSSE…LSEL and ATTT…PSPP.

The protein resides in the membrane. This chain is Transmembrane protein 171 (TMEM171), found in Bos taurus (Bovine).